A 102-amino-acid polypeptide reads, in one-letter code: RNA-binding protein Hfq (102 aa).

The Sm domain maps to 9 to 68 (DPFLNALRRERVPVSIYLVNGIKLQGQIESFDQFVILLKNTVSQMVYKHAISTVVPSRPV). Positions 63–102 (VPSRPVSHHSNNAGGGASNNYHHGSNVQGSTAQQDSEETE) are disordered. Over residues 70–88 (HHSNNAGGGASNNYHHGSN) the composition is skewed to low complexity.

The protein belongs to the Hfq family. As to quaternary structure, homohexamer.

In terms of biological role, RNA chaperone that binds small regulatory RNA (sRNAs) and mRNAs to facilitate mRNA translational regulation in response to envelope stress, environmental stress and changes in metabolite concentrations. Also binds with high specificity to tRNAs. This is RNA-binding protein Hfq from Salmonella choleraesuis (strain SC-B67).